A 301-amino-acid polypeptide reads, in one-letter code: Glycine--tRNA ligase alpha subunit (301 aa).

This sequence belongs to the class-II aminoacyl-tRNA synthetase family. As to quaternary structure, tetramer of two alpha and two beta subunits.

The protein resides in the cytoplasm. It catalyses the reaction tRNA(Gly) + glycine + ATP = glycyl-tRNA(Gly) + AMP + diphosphate. The polypeptide is Glycine--tRNA ligase alpha subunit (Shewanella halifaxensis (strain HAW-EB4)).